The chain runs to 798 residues: Probable serine/threonine-protein kinase DDB_G0276461 (798 aa).

Positions 54-324 (VTEVKLVAEG…DLLNYLNEIR (271 aa)) constitute a Protein kinase domain. ATP-binding positions include 60 to 68 (VAEGGFGFV) and lysine 82. Aspartate 185 acts as the Proton acceptor in catalysis. Disordered stretches follow at residues 330-538 (GLQT…NGNF), 553-645 (TNGS…SYNN), and 659-798 (SSAS…FGIL). Composition is skewed to low complexity over residues 335-406 (SSNN…NTPN), 429-490 (SNSN…NNNN), 506-538 (PSPS…NGNF), 557-603 (TNFE…INNS), 611-642 (SSGS…NSGS), and 659-678 (SSAS…NSWN). A compositionally biased stretch (polar residues) spans 679 to 697 (VTLTPSQSNKNSTGNLKPL). Residues 698–716 (NNNNNNNNNNNNRFANNTN) show a composition bias toward low complexity. Over residues 717 to 769 (SSRDYSFDFSSPNTSNNNDFGSFVQPSSSSSLNTTHFSKPNYNVNLNQTTSMT) the composition is skewed to polar residues. A compositionally biased stretch (low complexity) spans 770 to 790 (NNYNNNNYNNNNNSNNNNNNS).

Belongs to the protein kinase superfamily. Ser/Thr protein kinase family.

It carries out the reaction L-seryl-[protein] + ATP = O-phospho-L-seryl-[protein] + ADP + H(+). The catalysed reaction is L-threonyl-[protein] + ATP = O-phospho-L-threonyl-[protein] + ADP + H(+). The polypeptide is Probable serine/threonine-protein kinase DDB_G0276461 (Dictyostelium discoideum (Social amoeba)).